A 128-amino-acid polypeptide reads, in one-letter code: Flagellar hook-basal body complex protein FliE (128 aa).

Positions Met1–Gly60 are disordered. Positions Arg33–Ser55 are enriched in polar residues.

The protein belongs to the FliE family.

It is found in the bacterial flagellum basal body. The polypeptide is Flagellar hook-basal body complex protein FliE (Rhodopirellula baltica (strain DSM 10527 / NCIMB 13988 / SH1)).